The sequence spans 100 residues: Large ribosomal subunit protein bL21 (100 aa).

The protein belongs to the bacterial ribosomal protein bL21 family. Part of the 50S ribosomal subunit. Contacts protein L20.

This protein binds to 23S rRNA in the presence of protein L20. In Wolbachia pipientis wMel, this protein is Large ribosomal subunit protein bL21.